The chain runs to 176 residues: Inner membrane-spanning protein YciB (176 aa).

6 helical membrane passes run 3-23 (FLFD…WGIF), 24-44 (TATA…AFRH), 49-69 (TMLW…LVLH), 72-92 (KFIQ…LLAA), 121-141 (LAWA…VHNF), and 149-169 (FKLF…SLWL).

This sequence belongs to the YciB family.

The protein resides in the cell inner membrane. Functionally, plays a role in cell envelope biogenesis, maintenance of cell envelope integrity and membrane homeostasis. This Burkholderia cenocepacia (strain ATCC BAA-245 / DSM 16553 / LMG 16656 / NCTC 13227 / J2315 / CF5610) (Burkholderia cepacia (strain J2315)) protein is Inner membrane-spanning protein YciB.